Consider the following 353-residue polypeptide: MSKRETFNETFLKAARGEKADHTPVWYMRQAGRSQPEYRKLKEKYGLFEITHQPELCAYVTRLPVEQYGVDAAILYKDIMTPLPSIGVDVEIKNGIGPVIDQPIRSLADIEKLGQIDPEQDVPYVLETIKLLVNEQLNVPLIGFSGAPFTLASYMIEGGPSKNYNKTKAFMYSMPDAWNLLMSKLADMIIVYVKAQIEAGAKAIQIFDSWVGALNQADYRTYIKPVMNRIFSELAKENVPLIMFGVGASHLAGDWHDLPLDVVGLDWRLGIDEARSKGITKTVQGNLDPSILLAPWEVIEQKTKEILDQGMESDGFIFNLGHGVFPDVSPEVLKKLTAFVHEYSQNKKMGQYS.

Residues 29–33, F48, D78, Y154, S209, and H322 contribute to the substrate site; that span reads RQAGR.

The protein belongs to the uroporphyrinogen decarboxylase family. As to quaternary structure, homodimer.

It localises to the cytoplasm. It catalyses the reaction uroporphyrinogen III + 4 H(+) = coproporphyrinogen III + 4 CO2. Its pathway is porphyrin-containing compound metabolism; protoporphyrin-IX biosynthesis; coproporphyrinogen-III from 5-aminolevulinate: step 4/4. In terms of biological role, catalyzes the decarboxylation of four acetate groups of uroporphyrinogen-III to yield coproporphyrinogen-III. The protein is Uroporphyrinogen decarboxylase (hemE) of Bacillus subtilis (strain 168).